The primary structure comprises 292 residues: 33 kDa chaperonin (292 aa).

2 disulfides stabilise this stretch: Cys230–Cys232 and Cys263–Cys266.

This sequence belongs to the HSP33 family. Under oxidizing conditions two disulfide bonds are formed involving the reactive cysteines. Under reducing conditions zinc is bound to the reactive cysteines and the protein is inactive.

It localises to the cytoplasm. In terms of biological role, redox regulated molecular chaperone. Protects both thermally unfolding and oxidatively damaged proteins from irreversible aggregation. Plays an important role in the bacterial defense system toward oxidative stress. The polypeptide is 33 kDa chaperonin (Salmonella typhimurium (strain LT2 / SGSC1412 / ATCC 700720)).